The chain runs to 160 residues: Large ribosomal subunit protein eL21 (160 aa).

Belongs to the eukaryotic ribosomal protein eL21 family.

The sequence is that of Large ribosomal subunit protein eL21 (rpl21) from Dictyostelium discoideum (Social amoeba).